Reading from the N-terminus, the 126-residue chain is Probable 4-amino-4-deoxy-L-arabinose-phosphoundecaprenol flippase subunit ArnF (126 aa).

Residues 1–21 (MGFLWALFSVGLVSAAQLLLR) traverse the membrane as a helical segment. Topologically, residues 22 to 47 (SAMVALPPLTDIVAFLQHLLHFQPGT) are periplasmic. Residues 48–68 (VGLFFGLLGYLLSMVCWYFAL) traverse the membrane as a helical segment. Residues 69–76 (HRLPLSKA) lie on the Cytoplasmic side of the membrane. Residues 77–97 (YALLSLSYILVWAAAIWLPGW) traverse the membrane as a helical segment. At 98–100 (HEP) the chain is on the periplasmic side. The helical transmembrane segment at 101–121 (FYWQSLLGVTIIVAGVLTIFW) threads the bilayer. Residues 122–126 (PVKRR) are Cytoplasmic-facing.

This sequence belongs to the ArnF family. In terms of assembly, heterodimer of ArnE and ArnF.

The protein resides in the cell inner membrane. Its pathway is bacterial outer membrane biogenesis; lipopolysaccharide biosynthesis. Functionally, translocates 4-amino-4-deoxy-L-arabinose-phosphoundecaprenol (alpha-L-Ara4N-phosphoundecaprenol) from the cytoplasmic to the periplasmic side of the inner membrane. This Klebsiella pneumoniae (strain 342) protein is Probable 4-amino-4-deoxy-L-arabinose-phosphoundecaprenol flippase subunit ArnF.